Here is a 406-residue protein sequence, read N- to C-terminus: Uronyl 2-sulfotransferase (406 aa).

Over methionine 1–glycine 49 the chain is Cytoplasmic. Residues phenylalanine 50 to glycine 70 traverse the membrane as a helical; Signal-anchor for type II membrane protein segment. At proline 71 to arginine 406 the chain is on the lumenal side. N-linked (GlcNAc...) asparagine glycans are attached at residues asparagine 84, asparagine 140, and asparagine 155. Histidine 168 is a catalytic residue. N-linked (GlcNAc...) asparagine glycans are attached at residues asparagine 173 and asparagine 319. Residues glutamate 387–tryptophan 399 show a composition bias toward acidic residues. A disordered region spans residues glutamate 387 to arginine 406.

This sequence belongs to the sulfotransferase 3 family. Widely expressed.

The protein resides in the golgi apparatus membrane. In terms of biological role, sulfotransferase that catalyzes the transfer of sulfate to the position 2 of uronyl residues in glycosaminoglycan chains. Has mainly activity toward iduronyl residues in dermatan sulfate, and weaker activity toward glucuronyl residues of chondroitin sulfate. Has little to no activity toward desulfated N-resulfated heparin or N-sulfoheparosan. The polypeptide is Uronyl 2-sulfotransferase (Homo sapiens (Human)).